The chain runs to 385 residues: MKKISILGVTGSIGTQALDILRKDEENFKLVAVSSHSSVNKLLDIVDEFNPSYAVLTERNAYLKFKDHCSNKNLDTKILFGIDGLNTIVALPDIDMVLTSVVGMVGLVPTIKAIESGKDIALANKETLVVGGELVTKLAKKNKVKIFPVDSEHSAIFQCIKGNNFQDIEKLYLTASGGPFRGRTREQLFNVTVKEALNHPSWRMGKKLTIDSATLMNKGLEVIEAHFLFDMPYEKIKVVIHPESIVHSMVEYNDGSIMAQLSSTDMRLPIQYALNYAKRREALVNRLDFYNMKNLSFEKPDIDTFKPLKLAYDAGKIGGTMPAILNCANEAAVELFLFNKIKFLDISYILEECMNKFTCSNTYTIEDLLHIEIKVKKYVKDKFSK.

5 residues coordinate NADPH: Thr10, Gly11, Ser12, Ile13, and Asn124. 1-deoxy-D-xylulose 5-phosphate is bound at residue Lys125. NADPH is bound at residue Glu126. Asp150 contributes to the Mn(2+) binding site. Residues Ser151, Glu152, Ser176, and His199 each coordinate 1-deoxy-D-xylulose 5-phosphate. Glu152 contacts Mn(2+). Gly205 contacts NADPH. Residues Ser212, Asn217, Lys218, and Glu221 each coordinate 1-deoxy-D-xylulose 5-phosphate. Glu221 is a Mn(2+) binding site.

This sequence belongs to the DXR family. The cofactor is Mg(2+). Mn(2+) is required as a cofactor.

It carries out the reaction 2-C-methyl-D-erythritol 4-phosphate + NADP(+) = 1-deoxy-D-xylulose 5-phosphate + NADPH + H(+). It participates in isoprenoid biosynthesis; isopentenyl diphosphate biosynthesis via DXP pathway; isopentenyl diphosphate from 1-deoxy-D-xylulose 5-phosphate: step 1/6. Catalyzes the NADPH-dependent rearrangement and reduction of 1-deoxy-D-xylulose-5-phosphate (DXP) to 2-C-methyl-D-erythritol 4-phosphate (MEP). This is 1-deoxy-D-xylulose 5-phosphate reductoisomerase from Clostridium kluyveri (strain NBRC 12016).